Consider the following 270-residue polypeptide: Protein-ADP-ribose hydrolase (270 aa).

A Macro domain is found at 73 to 267 (VSVKDCQKTN…LYDTYLQKEN (195 aa)). Positions 92, 93, and 106 each coordinate ADP-D-ribose. Residues Cys112, His117, and Cys119 each coordinate Zn(2+). Residues Cys119, Ile120, Asp121, Ser212, Thr213, Gly214, Glu215, and Phe216 each coordinate ADP-D-ribose.

Belongs to the MacroD-type family. Zn-Macro subfamily. It depends on Zn(2+) as a cofactor.

It carries out the reaction 4-O-(ADP-D-ribosyl)-L-aspartyl-[protein] + H2O = L-aspartyl-[protein] + ADP-D-ribose + H(+). In terms of biological role, ADP-ribosylhydrolase that specifically reverses the SirTM-mediated mono-ADP-ribosylation at an asparatate residue of GcvH-L, by releasing ADP-ribose from the target protein. May play a role in the regulation of the response to host-induced oxidative stress. This is Protein-ADP-ribose hydrolase from Streptococcus pyogenes serotype M6 (strain ATCC BAA-946 / MGAS10394).